We begin with the raw amino-acid sequence, 362 residues long: Methylthioribose-1-phosphate isomerase (362 aa).

Residue Asp-252 is the Proton donor of the active site.

This sequence belongs to the eIF-2B alpha/beta/delta subunits family. MtnA subfamily.

The protein localises to the cytoplasm. Its subcellular location is the nucleus. It catalyses the reaction 5-(methylsulfanyl)-alpha-D-ribose 1-phosphate = 5-(methylsulfanyl)-D-ribulose 1-phosphate. The protein operates within amino-acid biosynthesis; L-methionine biosynthesis via salvage pathway; L-methionine from S-methyl-5-thio-alpha-D-ribose 1-phosphate: step 1/6. In terms of biological role, catalyzes the interconversion of methylthioribose-1-phosphate (MTR-1-P) into methylthioribulose-1-phosphate (MTRu-1-P). This is Methylthioribose-1-phosphate isomerase from Drosophila pseudoobscura pseudoobscura (Fruit fly).